The following is a 368-amino-acid chain: Endophilin-A2 (368 aa).

The segment at 1–21 (MSVAGLKKQFYKASQLVSEKV) is membrane-binding amphipathic helix. The 232-residue stretch at 18–249 (SEKVGGAEGT…LKRRMREASS (232 aa)) folds into the BAR domain. A required for dimerization upon membrane association region spans residues 60–87 (PNPASRAKLTMLNTVSKIRGQVKNPGYP). Residues 181 to 250 (EELRQAMEKF…KRRMREASSR (70 aa)) adopt a coiled-coil conformation. Residues 218-254 (LVDAQLDYHRQAVQILDELADKLKRRMREASSRPKRE) form an interaction with ARC region. The tract at residues 243-308 (RMREASSRPK…PSRSMPPLDQ (66 aa)) is disordered. Positions 245–263 (REASSRPKREYKPKPRELL) are enriched in basic and acidic residues. Ser288 and Ser292 each carry phosphoserine. Residue Thr298 is modified to Phosphothreonine. Residues 306–365 (LDQPSCKALYDFEPENDGELGFHEGDIITLTNQIDENWYEGMLDGQSGFFPLSYVEVLVP) enclose the SH3 domain. Tyr315 bears the Phosphotyrosine mark.

The protein belongs to the endophilin family. Interacts with ARC, SYNJ1 and DNM1. Interacts with PDCD6IP. Interacts with BIN2.

The protein resides in the cytoplasm. It localises to the early endosome membrane. Its subcellular location is the cell projection. The protein localises to the podosome. Functionally, implicated in endocytosis. May recruit other proteins to membranes with high curvature. The protein is Endophilin-A2 of Bos taurus (Bovine).